The primary structure comprises 119 residues: Large ribosomal subunit protein bL20 (119 aa).

The protein belongs to the bacterial ribosomal protein bL20 family.

Its function is as follows. Binds directly to 23S ribosomal RNA and is necessary for the in vitro assembly process of the 50S ribosomal subunit. It is not involved in the protein synthesizing functions of that subunit. This is Large ribosomal subunit protein bL20 from Bacillus licheniformis (strain ATCC 14580 / DSM 13 / JCM 2505 / CCUG 7422 / NBRC 12200 / NCIMB 9375 / NCTC 10341 / NRRL NRS-1264 / Gibson 46).